The primary structure comprises 425 residues: Probable proline--tRNA ligase, mitochondrial (425 aa).

This sequence belongs to the class-II aminoacyl-tRNA synthetase family.

Its subcellular location is the mitochondrion. It catalyses the reaction tRNA(Pro) + L-proline + ATP = L-prolyl-tRNA(Pro) + AMP + diphosphate. The protein is Probable proline--tRNA ligase, mitochondrial of Schizosaccharomyces pombe (strain 972 / ATCC 24843) (Fission yeast).